The following is a 78-amino-acid chain: DNA-directed RNA polymerase subunit omega (78 aa).

This sequence belongs to the RNA polymerase subunit omega family. In terms of assembly, in cyanobacteria the RNAP catalytic core is composed of 2 alpha, 1 beta, 1 beta', 1 gamma and 1 omega subunit. When a sigma factor is associated with the core the holoenzyme is formed, which can initiate transcription.

The catalysed reaction is RNA(n) + a ribonucleoside 5'-triphosphate = RNA(n+1) + diphosphate. Functionally, promotes RNA polymerase assembly. Latches the N- and C-terminal regions of the beta' subunit thereby facilitating its interaction with the beta and alpha subunits. The chain is DNA-directed RNA polymerase subunit omega from Prochlorococcus marinus (strain MIT 9312).